We begin with the raw amino-acid sequence, 543 residues long: ATP synthase subunit alpha (543 aa).

G174–T181 is a binding site for ATP. Residues V521 to K543 form a disordered region.

It belongs to the ATPase alpha/beta chains family. F-type ATPases have 2 components, CF(1) - the catalytic core - and CF(0) - the membrane proton channel. CF(1) has five subunits: alpha(3), beta(3), gamma(1), delta(1), epsilon(1). CF(0) has three main subunits: a(1), b(2) and c(9-12). The alpha and beta chains form an alternating ring which encloses part of the gamma chain. CF(1) is attached to CF(0) by a central stalk formed by the gamma and epsilon chains, while a peripheral stalk is formed by the delta and b chains.

It is found in the cell membrane. The enzyme catalyses ATP + H2O + 4 H(+)(in) = ADP + phosphate + 5 H(+)(out). Functionally, produces ATP from ADP in the presence of a proton gradient across the membrane. The alpha chain is a regulatory subunit. This chain is ATP synthase subunit alpha, found in Bifidobacterium longum (strain DJO10A).